We begin with the raw amino-acid sequence, 147 residues long: Cytochrome c-type biogenesis protein CcmE (147 aa).

Residues 1-9 are Cytoplasmic-facing; it reads MKSLKKKRR. Residues 10–30 traverse the membrane as a helical; Signal-anchor for type II membrane protein segment; the sequence is IQILVAAAVALVLAVGLIGYG. Topologically, residues 31-147 are periplasmic; sequence FRDGINLYRS…EQGVYQEPNS (117 aa). 2 residues coordinate heme: histidine 123 and tyrosine 127.

The protein belongs to the CcmE/CycJ family.

The protein resides in the cell inner membrane. Functionally, heme chaperone required for the biogenesis of c-type cytochromes. Transiently binds heme delivered by CcmC and transfers the heme to apo-cytochromes in a process facilitated by CcmF and CcmH. This chain is Cytochrome c-type biogenesis protein CcmE, found in Paracoccus denitrificans (strain Pd 1222).